The chain runs to 264 residues: Thymidylate synthase (264 aa).

Position 21 (R21) interacts with dUMP. H51 provides a ligand contact to (6R)-5,10-methylene-5,6,7,8-tetrahydrofolate. 126-127 is a binding site for dUMP; sequence RR. Catalysis depends on C146, which acts as the Nucleophile. DUMP contacts are provided by residues 166-169, N177, and 207-209; these read RSAD and HLY. D169 provides a ligand contact to (6R)-5,10-methylene-5,6,7,8-tetrahydrofolate. Position 263 (A263) interacts with (6R)-5,10-methylene-5,6,7,8-tetrahydrofolate.

This sequence belongs to the thymidylate synthase family. Bacterial-type ThyA subfamily. In terms of assembly, homodimer.

The protein resides in the cytoplasm. It carries out the reaction dUMP + (6R)-5,10-methylene-5,6,7,8-tetrahydrofolate = 7,8-dihydrofolate + dTMP. The protein operates within pyrimidine metabolism; dTTP biosynthesis. Catalyzes the reductive methylation of 2'-deoxyuridine-5'-monophosphate (dUMP) to 2'-deoxythymidine-5'-monophosphate (dTMP) while utilizing 5,10-methylenetetrahydrofolate (mTHF) as the methyl donor and reductant in the reaction, yielding dihydrofolate (DHF) as a by-product. This enzymatic reaction provides an intracellular de novo source of dTMP, an essential precursor for DNA biosynthesis. The polypeptide is Thymidylate synthase (Bartonella henselae (strain ATCC 49882 / DSM 28221 / CCUG 30454 / Houston 1) (Rochalimaea henselae)).